Here is a 247-residue protein sequence, read N- to C-terminus: Serine/threonine-protein phosphatase 2A activator (247 aa).

The protein belongs to the PTPA-type PPIase family.

The protein resides in the cytoplasm. The enzyme catalyses [protein]-peptidylproline (omega=180) = [protein]-peptidylproline (omega=0). Its function is as follows. PPIases accelerate the folding of proteins. It catalyzes the cis-trans isomerization of proline imidic peptide bonds in oligopeptides. Acts as a regulatory subunit for PP2A-like phosphatases modulating their activity or substrate specificity, probably by inducing a conformational change in the catalytic subunit, a direct target of the PPIase. Can reactivate inactive phosphatase PP2A-phosphatase methylesterase complexes (PP2Ai) in presence of ATP and Mg(2+) by dissociating the inactive form from the complex. This Encephalitozoon cuniculi (strain GB-M1) (Microsporidian parasite) protein is Serine/threonine-protein phosphatase 2A activator.